The following is a 508-amino-acid chain: Polyamine oxidase FMS1 (508 aa).

This sequence belongs to the flavin monoamine oxidase family. It depends on FAD as a cofactor.

It catalyses the reaction spermine + O2 + H2O = 3-aminopropanal + spermidine + H2O2. The catalysed reaction is spermidine + O2 + H2O = 3-aminopropanal + putrescine + H2O2. It carries out the reaction N(1)-acetylspermine + O2 + H2O = 3-acetamidopropanal + spermidine + H2O2. The enzyme catalyses N(1)-acetylspermidine + O2 + H2O = 3-acetamidopropanal + putrescine + H2O2. It catalyses the reaction N(8)-acetylspermidine + O2 + H2O = 4-acetamidobutanal + propane-1,3-diamine + H2O2. Involved in the production of beta-alanine, a precursor of pantothenic acid. Multicopy suppressor of fenpropimorph resistance. The sequence is that of Polyamine oxidase FMS1 (FMS1) from Saccharomyces cerevisiae (strain ATCC 204508 / S288c) (Baker's yeast).